The primary structure comprises 572 residues: MRTSQYLLSTLKETPADAEVISHQLMLRAGMIRKLASGLYTWLPTGLRVLKKVENIVREEMNNAGAIEVSMPVVQPADLWVESGRWEQYGPELLRFVDRGERSFVLGPTHEEVITDLIRNELNSYKQLPLNFFQIQTKFRDEVRPRFGVMRSREFLMKDSYSFHTSQESLQETYDKMYEAYSKIFSRMGLDFRAVQADTGSIGGSASHEFQVLAQSGEDDVIFSDTSDYAANIEFAEALAPSAPRAAASEEMKLVDTPNAKTIAELVEQFNLPIEKTVKTLLVKAVEGSAYPLVALLVRGDHELNEVKAEKLAQVASPLTFATEAEIRAVVNAGPGSLGPVNMPIPVVIDRTVAAMSDFSAGANIDGQHYFGINWDRDVATPEVADIRNVVAGDPSPDGQGTLMIKRGIEVGHIFQLGTKYSEALNASVQGEDGRNQILTMGCYGIGVTRVVAAAIEQNHDERGIVWPDNLAPFQVAILPMNMHKSYRVQELAEKLYSELRAQGIEVLMDDRKERPGVMFADMELIGIPHTVVIGDRNLDSDDIEYKYRRSGEKQMIKTGDILDYLVKAIKG.

This sequence belongs to the class-II aminoacyl-tRNA synthetase family. ProS type 1 subfamily. Homodimer.

It is found in the cytoplasm. The catalysed reaction is tRNA(Pro) + L-proline + ATP = L-prolyl-tRNA(Pro) + AMP + diphosphate. Its function is as follows. Catalyzes the attachment of proline to tRNA(Pro) in a two-step reaction: proline is first activated by ATP to form Pro-AMP and then transferred to the acceptor end of tRNA(Pro). As ProRS can inadvertently accommodate and process non-cognate amino acids such as alanine and cysteine, to avoid such errors it has two additional distinct editing activities against alanine. One activity is designated as 'pretransfer' editing and involves the tRNA(Pro)-independent hydrolysis of activated Ala-AMP. The other activity is designated 'posttransfer' editing and involves deacylation of mischarged Ala-tRNA(Pro). The misacylated Cys-tRNA(Pro) is not edited by ProRS. This Enterobacter sp. (strain 638) protein is Proline--tRNA ligase.